The primary structure comprises 962 residues: Integrator complex subunit 7 (962 aa).

A phosphoserine mark is found at Ser338 and Ser809.

Belongs to the Integrator subunit 7 family. As to quaternary structure, component of the Integrator complex, composed of core subunits INTS1, INTS2, INTS3, INTS4, INTS5, INTS6, INTS7, INTS8, INTS9/RC74, INTS10, INTS11/CPSF3L, INTS12, INTS13, INTS14 and INTS15. The core complex associates with protein phosphatase 2A subunits PPP2CA and PPP2R1A, to form the Integrator-PP2A (INTAC) complex. Interacts with NABP2.

It is found in the nucleus. It localises to the chromosome. The protein resides in the cytoplasm. Functionally, component of the integrator complex, a multiprotein complex that terminates RNA polymerase II (Pol II) transcription in the promoter-proximal region of genes. The integrator complex provides a quality checkpoint during transcription elongation by driving premature transcription termination of transcripts that are unfavorably configured for transcriptional elongation: the complex terminates transcription by (1) catalyzing dephosphorylation of the C-terminal domain (CTD) of Pol II subunit POLR2A/RPB1 and SUPT5H/SPT5, (2) degrading the exiting nascent RNA transcript via endonuclease activity and (3) promoting the release of Pol II from bound DNA. The integrator complex is also involved in terminating the synthesis of non-coding Pol II transcripts, such as enhancer RNAs (eRNAs), small nuclear RNAs (snRNAs), telomerase RNAs and long non-coding RNAs (lncRNAs). May be not involved in the recruitment of cytoplasmic dynein to the nuclear envelope by different components of the INT complex. Plays a role in DNA damage response (DDR) signaling during the S phase. In Bos taurus (Bovine), this protein is Integrator complex subunit 7 (INTS7).